A 150-amino-acid chain; its full sequence is Large ribosomal subunit protein bL9 (150 aa).

The protein belongs to the bacterial ribosomal protein bL9 family.

Binds to the 23S rRNA. The sequence is that of Large ribosomal subunit protein bL9 from Pectobacterium carotovorum subsp. carotovorum (strain PC1).